We begin with the raw amino-acid sequence, 814 residues long: Rho GTPase-activating protein 26 (814 aa).

The region spanning 7–262 (EFSDCCLDSP…MKENPLEHKT (256 aa)) is the BAR domain. Residues 265–369 (PYTMEGYLYV…WMEAMDGREP (105 aa)) enclose the PH domain. The Rho-GAP domain occupies 383 to 568 (AQLDSIGFSI…ILIENHEKIF (186 aa)). Residues 624-648 (LESVSSNPNSILNSSSSLQPNMNSS) show a composition bias toward low complexity. Residues 624 to 696 (LESVSSNPNS…MPTSSTSSDS (73 aa)) form a disordered region. Residues 662–672 (SLPPNPSPTSP) show a composition bias toward pro residues. At Ser-668 the chain carries Phosphoserine. Thr-670 bears the Phosphothreonine mark. Ser-671 bears the Phosphoserine mark. Low complexity predominate over residues 673 to 696 (LSPSWPMFSAPSSPMPTSSTSSDS). The SH3 domain occupies 756–814 (TPFRKAKALYACKAEHDSELSFTAGTVFDNVHPSQEPGWLEGTLNGKTGLIPENYVEFL).

As to quaternary structure, interacts with NYAP1, NYAP2 and MYO16. Interacts with MICAL1 and WDR44. Binds to the C-terminus of PTK2/FAK1. In terms of assembly, (Microbial infection) Interacts with human parainfluenza virus type 2 proteins P and V. In terms of processing, phosphorylated in a PINK1-dependent fashion promoting retrograde mitochondrial trafficking and clustering.

It localises to the endosome membrane. Its subcellular location is the cytoplasm. The protein resides in the cell junction. The protein localises to the focal adhesion. It is found in the cytoskeleton. Its function is as follows. GTPase-activating protein for RHOA and CDC42. Facilitates mitochondrial quality control by promoting Parkin-mediated recruitment of autophagosomes to damaged mitochondria. Negatively regulates the growth of human parainfluenza virus type 2 by inhibiting hPIV-2-mediated RHOA activation via interaction with two of its viral proteins P and V. In terms of biological role, associates with MICAL1 on the endosomal membrane to promote Rab8-Rab10-dependent tubule extension. After dissociation of MICAL1, recruits WDR44 which connects the endoplasmic reticulum (ER) with the endosomal tubule, thereby participating in the export of a subset of neosynthesized proteins. The chain is Rho GTPase-activating protein 26 (ARHGAP26) from Homo sapiens (Human).